Here is a 468-residue protein sequence, read N- to C-terminus: 6-phospho-beta-galactosidase (468 aa).

Residues Gln19, His116, Asn159, Glu160, and Asn297 each contribute to the D-galactose 6-phosphate site. The active-site Proton donor is the Glu160. Glu375 (nucleophile) is an active-site residue. Ser428, Trp429, Lys435, and Tyr437 together coordinate D-galactose 6-phosphate.

It belongs to the glycosyl hydrolase 1 family.

The catalysed reaction is a 6-phospho-beta-D-galactoside + H2O = D-galactose 6-phosphate + an alcohol. It functions in the pathway carbohydrate metabolism; lactose degradation; D-galactose 6-phosphate and beta-D-glucose from lactose 6-phosphate: step 1/1. This Streptococcus pyogenes serotype M2 (strain MGAS10270) protein is 6-phospho-beta-galactosidase.